We begin with the raw amino-acid sequence, 340 residues long: MAVEMLYEADVKVAALDGKKIAVIGYGSQGHAHAQNLRDSGHDVIIGVRHGKSFDKAKEDGFDTYEVGEATKLADIIMVLAPDEIQKDIYKDEIAPNLSAGKALGFAHGFNIHFGYIKAPEDVDVFMVAPKGPGHLVRRTYTEGFGVPSLYAVYQNPTGNAENIALDWAKGIGSARVGLLVTTFKEETEEDLFGEQAVLMGGLTHLIEAGFEVLTEAGYAPQLAYFEVLHEMKLIVDLIYEGGFKKMRQSCSNTAEFGDFVTGPRVIGPEVKENMKAALADIQSGKFAREFVEDHDAGFPRLKAFRKEAEGLEIEKIGAELRKAMPFVNQNDDDAFKIYN.

One can recognise a KARI N-terminal Rossmann domain in the interval 3 to 182; that stretch reads VEMLYEADVK…GSARVGLLVT (180 aa). Residues 26–29, Arg49, Ser53, and 83–86 contribute to the NADP(+) site; these read YGSQ and DEIQ. His108 is an active-site residue. An NADP(+)-binding site is contributed by Gly134. In terms of domain architecture, KARI C-terminal knotted spans 183 to 328; it reads TFKEETEEDL…AELRKAMPFV (146 aa). Mg(2+) is bound by residues Asp191, Glu195, Glu227, and Glu231. Ser252 is a binding site for substrate.

This sequence belongs to the ketol-acid reductoisomerase family. Mg(2+) serves as cofactor.

It carries out the reaction (2R)-2,3-dihydroxy-3-methylbutanoate + NADP(+) = (2S)-2-acetolactate + NADPH + H(+). It catalyses the reaction (2R,3R)-2,3-dihydroxy-3-methylpentanoate + NADP(+) = (S)-2-ethyl-2-hydroxy-3-oxobutanoate + NADPH + H(+). The protein operates within amino-acid biosynthesis; L-isoleucine biosynthesis; L-isoleucine from 2-oxobutanoate: step 2/4. It participates in amino-acid biosynthesis; L-valine biosynthesis; L-valine from pyruvate: step 2/4. Its function is as follows. Involved in the biosynthesis of branched-chain amino acids (BCAA). Catalyzes an alkyl-migration followed by a ketol-acid reduction of (S)-2-acetolactate (S2AL) to yield (R)-2,3-dihydroxy-isovalerate. In the isomerase reaction, S2AL is rearranged via a Mg-dependent methyl migration to produce 3-hydroxy-3-methyl-2-ketobutyrate (HMKB). In the reductase reaction, this 2-ketoacid undergoes a metal-dependent reduction by NADPH to yield (R)-2,3-dihydroxy-isovalerate. In Streptococcus mutans serotype c (strain ATCC 700610 / UA159), this protein is Ketol-acid reductoisomerase (NADP(+)).